The sequence spans 340 residues: GTPase Obg (340 aa).

Residues 1 to 161 (MKFVDMTNIT…QHLLLELLLI (161 aa)) enclose the Obg domain. The OBG-type G domain maps to 162-335 (ANVGIFGLPN…LCNSIMKFIM (174 aa)). GTP is bound by residues 168–175 (GLPNSGKS), 193–197 (FTTLV), 215–218 (DIPG), 285–288 (NKID), and 316–318 (SSI). Mg(2+) contacts are provided by S175 and T195.

The protein belongs to the TRAFAC class OBG-HflX-like GTPase superfamily. OBG GTPase family. Monomer. Mg(2+) is required as a cofactor.

Its subcellular location is the cytoplasm. In terms of biological role, an essential GTPase which binds GTP, GDP and possibly (p)ppGpp with moderate affinity, with high nucleotide exchange rates and a fairly low GTP hydrolysis rate. Plays a role in control of the cell cycle, stress response, ribosome biogenesis and in those bacteria that undergo differentiation, in morphogenesis control. The protein is GTPase Obg of Blochmanniella pennsylvanica (strain BPEN).